We begin with the raw amino-acid sequence, 495 residues long: Fibronectin type III and SPRY domain-containing protein 1 (495 aa).

The stretch at 4–99 (QKESLRKIIT…ALESSEELLE (96 aa)) forms a coiled coil. Residues 105-162 (LCSSENDSFTQAAKDIKDSVTMAPAFRLSLKAKASDSMNHMMVDFTHERNLLQSITFL) enclose the COS domain. The region spanning 164–268 (VPATPEIHVA…EPVTLETHAF (105 aa)) is the Fibronectin type-III domain. Residues 281 to 476 (LKVEDLSVEW…VQTGLQVPSI (196 aa)) form the B30.2/SPRY domain. The tract at residues 306-332 (KNRTNSPMHSPARTAMMSPKRAPSARV) is disordered. Ser490 is modified (phosphoserine).

As to quaternary structure, oligomerization is required for binding to microtubules.

It localises to the cytoplasm. The protein localises to the cytoskeleton. Its subcellular location is the microtubule organizing center. It is found in the centrosome. The protein resides in the nucleus. It localises to the cleavage furrow. Its function is as follows. May be involved in microtubule organization and stabilization. The sequence is that of Fibronectin type III and SPRY domain-containing protein 1 (fsd1) from Danio rerio (Zebrafish).